The chain runs to 373 residues: Trifolitoxin-processing protein TfxB (373 aa).

This sequence to E.coli McbC which is involved in the processing of microcin B17 (MCCB17).

Its subcellular location is the cytoplasm. Its function is as follows. The actions of the proteins TfxB, TfxD and TfxF are implicated in the processing of the inactive trifolitoxin (TfxA) precursor into the active peptide. The sequence is that of Trifolitoxin-processing protein TfxB (tfxB) from Rhizobium leguminosarum bv. trifolii.